Reading from the N-terminus, the 310-residue chain is Bacteriochlorophyll synthase 34 kDa chain (310 aa).

A compositionally biased stretch (polar residues) spans 1–13; that stretch reads MSDMSDQTRLSSP. A disordered region spans residues 1–20; the sequence is MSDMSDQTRLSSPPSLPLHK. The next 8 helical transmembrane spans lie at 39–59, 67–87, 112–132, 134–154, 166–186, 187–207, 248–268, and 287–307; these read VTWF…GALG, LLLG…VVND, HVYI…LFLG, QVAF…LRPI, LVAI…FAPL, TGES…IMTV, VIGL…AILL, and VFFN…AAIG.

The protein resides in the cell membrane. It participates in porphyrin-containing compound metabolism; bacteriochlorophyll biosynthesis (light-independent). Its function is as follows. Catalyzes the esterification of bacteriochlorophyllide a by geranylgeraniol-PPi. The chain is Bacteriochlorophyll synthase 34 kDa chain (bchG) from Chloroflexus aurantiacus (strain ATCC 29366 / DSM 635 / J-10-fl).